The primary structure comprises 193 residues: Recombination protein RecR (193 aa).

The C4-type; degenerate zinc finger occupies 61 to 76 (CASCNALSETEVSEIC). One can recognise a Toprim domain in the interval 84 to 170 (SQLCMVLHPR…TFTKIAQGVP (87 aa)).

Belongs to the RecR family.

In terms of biological role, may play a role in DNA repair. It seems to be involved in an RecBC-independent recombinational process of DNA repair. It may act with RecF and RecO. The polypeptide is Recombination protein RecR (Helicobacter pylori (strain J99 / ATCC 700824) (Campylobacter pylori J99)).